Here is a 730-residue protein sequence, read N- to C-terminus: Ribosomal RNA large subunit methyltransferase K/L (730 aa).

Residues Thr46–Leu157 enclose the THUMP domain. The disordered stretch occupies residues Gly394–Arg418.

The protein belongs to the methyltransferase superfamily. RlmKL family.

It localises to the cytoplasm. It carries out the reaction guanosine(2445) in 23S rRNA + S-adenosyl-L-methionine = N(2)-methylguanosine(2445) in 23S rRNA + S-adenosyl-L-homocysteine + H(+). It catalyses the reaction guanosine(2069) in 23S rRNA + S-adenosyl-L-methionine = N(2)-methylguanosine(2069) in 23S rRNA + S-adenosyl-L-homocysteine + H(+). Specifically methylates the guanine in position 2445 (m2G2445) and the guanine in position 2069 (m7G2069) of 23S rRNA. In Pseudomonas putida (strain ATCC 700007 / DSM 6899 / JCM 31910 / BCRC 17059 / LMG 24140 / F1), this protein is Ribosomal RNA large subunit methyltransferase K/L.